The chain runs to 150 residues: uncharacterized protein (150 aa).

A helical transmembrane segment spans residues 19-39 (SLGMCVILIDGLIVLTAAFVF).

This sequence to B.subtilis YpjC, YqfU and YitT.

The protein resides in the cell membrane. This is an uncharacterized protein from Bacillus sp. (strain PS3).